Reading from the N-terminus, the 139-residue chain is D-ribose pyranase (139 aa).

H20 acts as the Proton donor in catalysis. Substrate contacts are provided by residues D28, H106, and 128 to 130 (YAN).

It belongs to the RbsD / FucU family. RbsD subfamily. In terms of assembly, homodecamer.

The protein resides in the cytoplasm. The catalysed reaction is beta-D-ribopyranose = beta-D-ribofuranose. It participates in carbohydrate metabolism; D-ribose degradation; D-ribose 5-phosphate from beta-D-ribopyranose: step 1/2. In terms of biological role, catalyzes the interconversion of beta-pyran and beta-furan forms of D-ribose. This chain is D-ribose pyranase, found in Proteus mirabilis (strain HI4320).